An 80-amino-acid chain; its full sequence is uncharacterized protein (80 aa).

This is an uncharacterized protein from Acidianus sp. F28 (AFV-2).